A 756-amino-acid chain; its full sequence is Catalase-peroxidase (756 aa).

The segment at residues 91–244 (WHSAGTYRTG…LAAVQMGLIY (154 aa)) is a cross-link (tryptophyl-tyrosyl-methioninium (Trp-Tyr) (with M-270)). Residue His-92 is the Proton acceptor of the active site. Positions 198-230 (AQKKMQQPGDGTLVAEPENHANEESRTASGERN) are disordered. Positions 214–223 (PENHANEESR) are enriched in basic and acidic residues. Positions 244–270 (YVNPEGPEGVPDPVASARDIRETFGRM) form a cross-link, tryptophyl-tyrosyl-methioninium (Tyr-Met) (with W-91). His-285 provides a ligand contact to heme b.

This sequence belongs to the peroxidase family. Peroxidase/catalase subfamily. As to quaternary structure, homodimer or homotetramer. It depends on heme b as a cofactor. In terms of processing, formation of the three residue Trp-Tyr-Met cross-link is important for the catalase, but not the peroxidase activity of the enzyme.

It carries out the reaction H2O2 + AH2 = A + 2 H2O. The catalysed reaction is 2 H2O2 = O2 + 2 H2O. In terms of biological role, bifunctional enzyme with both catalase and broad-spectrum peroxidase activity. The sequence is that of Catalase-peroxidase from Pseudomonas syringae pv. syringae (strain B728a).